The sequence spans 461 residues: FAD-dependent monooxygenase nodY2 (461 aa).

FAD-binding residues include Glu-48 and Arg-136. Arg-214 is an active-site residue. FAD is bound by residues Asp-338 and Gly-351.

The protein belongs to the paxM FAD-dependent monooxygenase family. FAD serves as cofactor.

Its pathway is secondary metabolite biosynthesis. Its function is as follows. FAD-dependent monooxygenase; part of the gene cluster that mediates the biosynthesis of the indole diterpenes nodulisporic acids (NA). Nodulisporic acid A (NAA) and its chemically modified derivatives are of particular significance because of their highly potent insecticidal activity against blood-feeding arthropods and lack of observable adverse effects on mammals, in particular the tremogenicity associated with the paspaline-derived IDTs is not observed. The geranylgeranyl diphosphate (GGPP) synthase ggs1, localized outside of the cluster, is proposed to catalyze the first step in nodulisporic acid biosynthesis via conversion of farnesyl pyrophosphate and isopentyl pyrophosphate into geranylgeranyl pyrophosphate (GGPP). Condensation of indole-3-glycerol phosphate with GGPP by the prenyl transferase nodC then forms 3-geranylgeranylindole (3-GGI). Epoxidation by the FAD-dependent monooxygenase nodM leads to a single-epoxidized-GGI that is substrate of the terpene cyclase nodB for cyclization to yield emindole SB. The terminal methyl carbon, C28, of emindole SB is then oxidized by the cytochrome P450 monooxygenase nodW to produce nodulisporic acid F (NAF), the pentacyclic core of NAA. NAF is converted to nodulisporic acid E (NAE) via prenylation. This step is probably performed by one of the indole diterpene prenyltransferases nodD1 or nodD2. Several oxidation steps performed by the FAD-linked oxidoreductase nodO and one of the cytochrome P450 monooxygenase nodR, nodX or nodZ further convert NAE to nodulisporic acid D (NAD). NAD is substrate of cytochrome P450 monooxygenase nodJ to produce the precursor of nodulisporic acid C (NAC), converted to NAC by one of the indole diterpene prenyltransferases nodD1 or nodD2. The FAD-dependent monooxygenase nodY2 then oxidizes NAC to nodulisporic acid B (NAB). Finally NAB is converted to NAA by one of the cytochrome P450 monooxygenases nodR, nodX or nodZ. In Hypoxylon pulicicidum, this protein is FAD-dependent monooxygenase nodY2.